The following is a 212-amino-acid chain: Ribonuclease HII (212 aa).

One can recognise an RNase H type-2 domain in the interval 22–212; the sequence is ILIAGLDEAG…APLKGMIDGL (191 aa). D28, E29, and D123 together coordinate a divalent metal cation.

It belongs to the RNase HII family. Mn(2+) serves as cofactor. Mg(2+) is required as a cofactor.

Its subcellular location is the cytoplasm. The catalysed reaction is Endonucleolytic cleavage to 5'-phosphomonoester.. Endonuclease that specifically degrades the RNA of RNA-DNA hybrids. The polypeptide is Ribonuclease HII (Dehalococcoides mccartyi (strain ATCC BAA-2100 / JCM 16839 / KCTC 5957 / BAV1)).